Consider the following 901-residue polypeptide: Protein translocase subunit SecA (901 aa).

Residues Gln-87, 105-109, and Asp-512 each bind ATP; that span reads GEGKT. Zn(2+) is bound by residues Cys-885, Cys-887, Cys-896, and His-897.

It belongs to the SecA family. Monomer and homodimer. Part of the essential Sec protein translocation apparatus which comprises SecA, SecYEG and auxiliary proteins SecDF-YajC and YidC. Requires Zn(2+) as cofactor.

Its subcellular location is the cell inner membrane. It is found in the cytoplasm. It carries out the reaction ATP + H2O + cellular proteinSide 1 = ADP + phosphate + cellular proteinSide 2.. Functionally, part of the Sec protein translocase complex. Interacts with the SecYEG preprotein conducting channel. Has a central role in coupling the hydrolysis of ATP to the transfer of proteins into and across the cell membrane, serving both as a receptor for the preprotein-SecB complex and as an ATP-driven molecular motor driving the stepwise translocation of polypeptide chains across the membrane. The polypeptide is Protein translocase subunit SecA (Salmonella paratyphi B (strain ATCC BAA-1250 / SPB7)).